We begin with the raw amino-acid sequence, 232 residues long: Chromosome partition protein MukE (232 aa).

Positions 203 to 232 (HTKEPSQGSLLSEEDQEEQAQEEMTEEGEA) are disordered. The segment covering 214–232 (SEEDQEEQAQEEMTEEGEA) has biased composition (acidic residues).

It belongs to the MukE family. As to quaternary structure, interacts, and probably forms a ternary complex, with MukF and MukB. The complex formation is stimulated by calcium or magnesium.

The protein resides in the cytoplasm. It localises to the nucleoid. Involved in chromosome condensation, segregation and cell cycle progression. May participate in facilitating chromosome segregation by condensation DNA from both sides of a centrally located replisome during cell division. Probably acts via its interaction with MukB and MukF. This is Chromosome partition protein MukE from Vibrio parahaemolyticus serotype O3:K6 (strain RIMD 2210633).